Consider the following 536-residue polypeptide: Cytochrome c oxidase subunit 1 (536 aa).

The chain crosses the membrane as a helical span at residues 19 to 39 (IGMTYLGFGMLSAMMGTGMSV). A Ca(2+)-binding site is contributed by E44. H67 lines the Fe(II)-heme a pocket. 6 helical membrane-spanning segments follow: residues 69-89 (LLMM…NFFL), 103-123 (LNNI…CSVL), 152-172 (AMFA…NFMV), 188-208 (PLFA…LPVL), 240-260 (LFWF…FGVM), and 273-293 (FGEM…FLVW). H246 contacts Cu cation. A cross-link (1'-histidyl-3'-tyrosine (His-Tyr)) is located at residues 246–250 (HPEVY). Y250 is a binding site for O2. 2 residues coordinate Cu cation: H295 and H296. Helical transmembrane passes span 315–335 (MVIA…IYGG) and 341–361 (VPML…LTGV). H373 and D374 together coordinate Mg(2+). Heme a3 is bound at residue H381. Residue H383 participates in Fe(II)-heme a binding. Helical transmembrane passes span 388-408 (MGAL…MFGL) and 418-438 (HFWL…FLGL). P446 contacts Ca(2+). The chain crosses the membrane as a helical span at residues 461–481 (MGSAMSVMSVLVGLKSVLVQL).

Belongs to the heme-copper respiratory oxidase family. In terms of assembly, component of the cytochrome c oxidase (complex IV, CIV), a multisubunit enzyme composed of a catalytic core of 3 subunits and several supernumerary subunits. The complex exists as a monomer or a dimer and forms supercomplexes (SCs) in the inner mitochondrial membrane with ubiquinol-cytochrome c oxidoreductase (cytochrome b-c1 complex, complex III, CIII). It depends on heme as a cofactor. The cofactor is Cu cation.

It is found in the mitochondrion inner membrane. The enzyme catalyses 4 Fe(II)-[cytochrome c] + O2 + 8 H(+)(in) = 4 Fe(III)-[cytochrome c] + 2 H2O + 4 H(+)(out). It participates in energy metabolism; oxidative phosphorylation. Component of the cytochrome c oxidase, the last enzyme in the mitochondrial electron transport chain which drives oxidative phosphorylation. The respiratory chain contains 3 multisubunit complexes succinate dehydrogenase (complex II, CII), ubiquinol-cytochrome c oxidoreductase (cytochrome b-c1 complex, complex III, CIII) and cytochrome c oxidase (complex IV, CIV), that cooperate to transfer electrons derived from NADH and succinate to molecular oxygen, creating an electrochemical gradient over the inner membrane that drives transmembrane transport and the ATP synthase. Cytochrome c oxidase is the component of the respiratory chain that catalyzes the reduction of oxygen to water. Electrons originating from reduced cytochrome c in the intermembrane space (IMS) are transferred via the dinuclear copper A center (CU(A)) of subunit 2 and heme A of subunit 1 to the active site in subunit 1, a binuclear center (BNC) formed by heme A3 and copper B (CU(B)). The BNC reduces molecular oxygen to 2 water molecules using 4 electrons from cytochrome c in the IMS and 4 protons from the mitochondrial matrix. The sequence is that of Cytochrome c oxidase subunit 1 (COX1) from Debaryomyces hansenii (strain ATCC 36239 / CBS 767 / BCRC 21394 / JCM 1990 / NBRC 0083 / IGC 2968) (Yeast).